Consider the following 291-residue polypeptide: Phosphatidylglycerol--prolipoprotein diacylglyceryl transferase (291 aa).

A run of 7 helical transmembrane segments spans residues 21–41, 60–80, 96–116, 124–144, 198–218, 225–245, and 258–278; these read IALH…MWLA, LLYA…VLFY, WDGG…MWWF, FLQV…MGRI, SQLY…NLYI, GSVS…VEFF, and ISMG…MMIW. Arg143 contacts a 1,2-diacyl-sn-glycero-3-phospho-(1'-sn-glycerol).

Belongs to the Lgt family.

The protein resides in the cell inner membrane. The catalysed reaction is L-cysteinyl-[prolipoprotein] + a 1,2-diacyl-sn-glycero-3-phospho-(1'-sn-glycerol) = an S-1,2-diacyl-sn-glyceryl-L-cysteinyl-[prolipoprotein] + sn-glycerol 1-phosphate + H(+). It participates in protein modification; lipoprotein biosynthesis (diacylglyceryl transfer). In terms of biological role, catalyzes the transfer of the diacylglyceryl group from phosphatidylglycerol to the sulfhydryl group of the N-terminal cysteine of a prolipoprotein, the first step in the formation of mature lipoproteins. This is Phosphatidylglycerol--prolipoprotein diacylglyceryl transferase from Photorhabdus laumondii subsp. laumondii (strain DSM 15139 / CIP 105565 / TT01) (Photorhabdus luminescens subsp. laumondii).